Here is a 156-residue protein sequence, read N- to C-terminus: 6,7-dimethyl-8-ribityllumazine synthase (156 aa).

5-amino-6-(D-ribitylamino)uracil-binding positions include phenylalanine 24, alanine 58–glutamate 60, and valine 82–isoleucine 84. Serine 87–threonine 88 serves as a coordination point for (2S)-2-hydroxy-3-oxobutyl phosphate. The active-site Proton donor is histidine 90. 5-amino-6-(D-ribitylamino)uracil is bound at residue phenylalanine 115. Position 129 (arginine 129) interacts with (2S)-2-hydroxy-3-oxobutyl phosphate.

It belongs to the DMRL synthase family.

The enzyme catalyses (2S)-2-hydroxy-3-oxobutyl phosphate + 5-amino-6-(D-ribitylamino)uracil = 6,7-dimethyl-8-(1-D-ribityl)lumazine + phosphate + 2 H2O + H(+). It functions in the pathway cofactor biosynthesis; riboflavin biosynthesis; riboflavin from 2-hydroxy-3-oxobutyl phosphate and 5-amino-6-(D-ribitylamino)uracil: step 1/2. Its function is as follows. Catalyzes the formation of 6,7-dimethyl-8-ribityllumazine by condensation of 5-amino-6-(D-ribitylamino)uracil with 3,4-dihydroxy-2-butanone 4-phosphate. This is the penultimate step in the biosynthesis of riboflavin. The sequence is that of 6,7-dimethyl-8-ribityllumazine synthase from Chlorobaculum parvum (strain DSM 263 / NCIMB 8327) (Chlorobium vibrioforme subsp. thiosulfatophilum).